We begin with the raw amino-acid sequence, 546 residues long: MNPSTTQARIVVDELIRGGVRDVVLCPGSRNAPLAFALSDADRAGRIRLHVRIDERTAGYLAIGLAVAERAPVCIAMTSGTAVANLGPAVVEANYARVPLIVLSANRPYEMLGTGANQTFEQLGYFGTQVRAAISLGLAPDLTGPNAADLDTLNAQWRSATCRVLVAATGARSANAGPVQFDIPLREPLVPDPAEPAGGTIPPGRPGGRSWTHTPPVTFDQPLDIDLTPDTVVIAGHGAGEHPNLAELPTVAEPTAPPPANPLHPLALRLAHPKQVIMLGRPTLHRPVSTLLADPSVPVYALTTGPRWPDVSGNSQATGTRAVTSGAPSAAWLRKCAELNEHAVTAVRKQLAAHPMTTGLHVAAAVADALRPGDQLVLGASNPVRDAALVGLRPDGIKVRSNRGVAGIDGTISTAIGAALAHDGRTVALIGDLTFVHDSSGLLIGPTEPTPRSLTIVVSNDNGGGIFELLEQGDPRFSDVSSRIFGTPHDVNIGALCHAYHVDYHQIEADALGAALEDPFQGMRVLEVKADRSSLRSLHASIKAAL.

This sequence belongs to the TPP enzyme family. MenD subfamily. As to quaternary structure, homodimer. Mg(2+) serves as cofactor. It depends on Mn(2+) as a cofactor. The cofactor is thiamine diphosphate.

The enzyme catalyses isochorismate + 2-oxoglutarate + H(+) = 5-enolpyruvoyl-6-hydroxy-2-succinyl-cyclohex-3-ene-1-carboxylate + CO2. It functions in the pathway quinol/quinone metabolism; 1,4-dihydroxy-2-naphthoate biosynthesis; 1,4-dihydroxy-2-naphthoate from chorismate: step 2/7. The protein operates within quinol/quinone metabolism; menaquinone biosynthesis. Its function is as follows. Catalyzes the thiamine diphosphate-dependent decarboxylation of 2-oxoglutarate and the subsequent addition of the resulting succinic semialdehyde-thiamine pyrophosphate anion to isochorismate to yield 2-succinyl-5-enolpyruvyl-6-hydroxy-3-cyclohexene-1-carboxylate (SEPHCHC). This chain is 2-succinyl-5-enolpyruvyl-6-hydroxy-3-cyclohexene-1-carboxylate synthase, found in Mycolicibacterium smegmatis (strain ATCC 700084 / mc(2)155) (Mycobacterium smegmatis).